The chain runs to 497 residues: Actin-binding protein WASF2 (497 aa).

Disordered regions lie at residues 173 to 203 and 239 to 436; these read KEKR…KEEW and ENVD…SDAR. The span at 252–263 shows a compositional bias: low complexity; sequence SDSASSPSPSFS. Pro residues-rich tracts occupy residues 298–335 and 343–403; these read SHPP…PPLP and GTPP…PPLP. Positions 435–452 constitute a WH2 domain; it reads ARSDLLSAIRQGFQLRRV. Ser-473 bears the Phosphoserine mark.

Belongs to the SCAR/WAVE family. In terms of assembly, binds actin and the Arp2/3 complex. Interacts with BAIAP2. Component of the WAVE2 complex composed of ABI1, CYFIP1/SRA1, NCKAP1/NAP1 (NCKAP1l/HEM1 in hematopoietic cells) and WASF2/WAVE2. Directly interacts with BRK1. Interacts with human cytomegalovirus protein UL135. Interacts with FNBP1L (via the SH3 domain).

The protein resides in the cytoplasm. It localises to the cytoskeleton. Its subcellular location is the cell projection. The protein localises to the lamellipodium. It is found in the basolateral cell membrane. Functionally, downstream effector molecule involved in the transmission of signals from tyrosine kinase receptors and small GTPases to the actin cytoskeleton. Promotes formation of actin filaments. Part of the WAVE complex that regulates lamellipodia formation. The WAVE complex regulates actin filament reorganization via its interaction with the Arp2/3 complex. The polypeptide is Actin-binding protein WASF2 (Mus musculus (Mouse)).